A 548-amino-acid chain; its full sequence is Probable manganese-dependent inorganic pyrophosphatase (548 aa).

The PPase part 1 stretch occupies residues 1 to 74 (MKALERVYVI…HIETLEPTVE (74 aa)). Mn(2+)-binding residues include histidine 12, aspartate 16, and aspartate 18. 2 consecutive CBS domains span residues 77–132 (ELKN…RLKI) and 254–311 (MSKK…VILV). The segment at 306-548 (KKVILVDHNE…KIGEVLRRER (243 aa)) is PPase part 2. Mn(2+) is bound by residues aspartate 312, histidine 334, and aspartate 386.

The protein belongs to the PPase class C family. Requires Mn(2+) as cofactor.

It localises to the cytoplasm. It carries out the reaction diphosphate + H2O = 2 phosphate + H(+). The chain is Probable manganese-dependent inorganic pyrophosphatase (ppaC) from Thermotoga maritima (strain ATCC 43589 / DSM 3109 / JCM 10099 / NBRC 100826 / MSB8).